The primary structure comprises 350 residues: Nuclear pore complex-interacting protein family member A1 (350 aa).

Positions Lys306–Asp325 are disordered.

The protein belongs to the NPIP family. In terms of assembly, may associate with the nuclear pore complex. As to expression, widely expressed.

The protein resides in the nucleus. Its subcellular location is the nuclear pore complex. It localises to the nucleus membrane. The protein is Nuclear pore complex-interacting protein family member A1 (NPIPA1) of Homo sapiens (Human).